The primary structure comprises 157 residues: MKVELCSFSGYKIYPGHGRRYARTDGKVFQFLNAKCESAFLSKRNPRQINWTVLYRRKHKKGQSEEIQKKRTRRAVKFQRAITGASLADIMAKRNQKPEVRKAQREQAIRAAKEAKKAKQASKKTAMAAAKAPTKAAPKQKIVKPVKVSAPRVGGKR.

Lysine 2 participates in a covalent cross-link: Glycyl lysine isopeptide (Lys-Gly) (interchain with G-Cter in SUMO2). ADP-ribosyl glutamic acid is present on glutamate 4. N6-acetyllysine; alternate is present on lysine 27. Lysine 27 is covalently cross-linked (Glycyl lysine isopeptide (Lys-Gly) (interchain with G-Cter in SUMO2); alternate). Lysine 35 participates in a covalent cross-link: Glycyl lysine isopeptide (Lys-Gly) (interchain with G-Cter in SUMO2). Lysine 77 is modified (N6-acetyllysine). Threonine 83 carries the post-translational modification Phosphothreonine. Serine 86 bears the Phosphoserine mark. Lysine 93 is modified (N6-acetyllysine). Residues 106 to 117 (EQAIRAAKEAKK) are compositionally biased toward basic and acidic residues. Positions 106-157 (EQAIRAAKEAKKAKQASKKTAMAAAKAPTKAAPKQKIVKPVKVSAPRVGGKR) are disordered. Residues 123–140 (KKTAMAAAKAPTKAAPKQ) show a composition bias toward low complexity. Position 131 is an N6-succinyllysine (lysine 131). A Glycyl lysine isopeptide (Lys-Gly) (interchain with G-Cter in SUMO2) cross-link involves residue lysine 147. Serine 149 is modified (phosphoserine).

The protein belongs to the eukaryotic ribosomal protein eL24 family. Component of the large ribosomal subunit. In terms of processing, mono-ADP-ribosylation at Glu-4 by PARP16 inhibits polysome assembly and mRNA loading, thereby inhibiting protein translation.

It localises to the cytoplasm. Functionally, component of the large ribosomal subunit. The ribosome is a large ribonucleoprotein complex responsible for the synthesis of proteins in the cell. This Bos taurus (Bovine) protein is Large ribosomal subunit protein eL24 (RPL24).